A 562-amino-acid chain; its full sequence is MGDMKYTELSDLYRRLEKTTLKTLKTKFVADFLKKTPDELLEVVPYLILGKVFPDWDERELGVGEKLLIKAVSMATGVQEREIENSVKDTGDLGESVALALKKKKQKSFFSQPLTIKRVYQTFIKIAEASGEGSQDRKLKYLANIFMDAQPEEGKYIARTVLGMMRTGVAEGILRDAIAEAFKVKAELVERAYMLTSDFGYVAKVAKLEGNDGLGKVHIQIGKPIRPMLAQNAASVKEALLEMGAEAAFEIKYDGARVQVHKDGDRVVIYSRRLENVTRSIPEVVDAIKASIKSEKAIVEGELVAVGEGGRPRPFQYVLRRFRRKYNIEEMIEKIPLELNLFDVLYVDGEPLIDTPFRERRAKLEEIVEEGEKLKLAQQLVTKKVEEAEEFYKKALELGHEGLMAKRLDSVYEPGNRGKKWLKIKPTMEDLDLVIIGAEWGEGRRAHLLGSFLVAAYDPHSGEFVPVGKVGSGFTDEDLVEFTKMLKPLIIGGEGKFVEIEPKVVIQVTYQEIQKSPKYRSGFALRFPRYVALREDKSPEEADTIERIAQLYEFQERFKAKK.

Glu-250 contributes to the ATP binding site. The N6-AMP-lysine intermediate role is filled by Lys-252. The ATP site is built by Arg-257, Arg-272, Glu-302, Phe-342, Arg-417, and Lys-423.

This sequence belongs to the ATP-dependent DNA ligase family. It depends on Mg(2+) as a cofactor. The cofactor is Zn(2+).

It carries out the reaction ATP + (deoxyribonucleotide)n-3'-hydroxyl + 5'-phospho-(deoxyribonucleotide)m = (deoxyribonucleotide)n+m + AMP + diphosphate.. It catalyses the reaction NAD(+) + (deoxyribonucleotide)n-3'-hydroxyl + 5'-phospho-(deoxyribonucleotide)m = (deoxyribonucleotide)n+m + AMP + beta-nicotinamide D-nucleotide.. Its function is as follows. DNA ligase that seals nicks in double-stranded DNA during DNA replication, DNA recombination and DNA repair. Can use both ATP and NAD(+), but NAD(+) may be a preferred nucleotide cofactor. The sequence is that of DNA ligase from Thermococcus onnurineus (strain NA1).